The primary structure comprises 625 residues: DNA mismatch repair protein MutL (625 aa).

It belongs to the DNA mismatch repair MutL/HexB family.

This protein is involved in the repair of mismatches in DNA. It is required for dam-dependent methyl-directed DNA mismatch repair. May act as a 'molecular matchmaker', a protein that promotes the formation of a stable complex between two or more DNA-binding proteins in an ATP-dependent manner without itself being part of a final effector complex. The sequence is that of DNA mismatch repair protein MutL from Bacteroides fragilis (strain YCH46).